Here is a 142-residue protein sequence, read N- to C-terminus: Hemoglobin subunit alpha-A (142 aa).

In terms of domain architecture, Globin spans 2–142 (VLSPTDKSIV…VSTVLTSKYR (141 aa)). Histidine 59 contributes to the O2 binding site. Residue histidine 88 coordinates heme b.

Belongs to the globin family. As to quaternary structure, heterotetramer of two alpha chains and two beta chains. In terms of tissue distribution, red blood cells.

Its function is as follows. Involved in oxygen transport from the lung to the various peripheral tissues. This Otolemur crassicaudatus (Brown greater galago) protein is Hemoglobin subunit alpha-A (HBAA).